Consider the following 47-residue polypeptide: Large ribosomal subunit protein bL34 (47 aa).

Residues 1–28 (MAKGKRTFQPNNRRRARVHGFRTRMRTR) are disordered.

This sequence belongs to the bacterial ribosomal protein bL34 family.

The sequence is that of Large ribosomal subunit protein bL34 from Corynebacterium efficiens (strain DSM 44549 / YS-314 / AJ 12310 / JCM 11189 / NBRC 100395).